A 339-amino-acid chain; its full sequence is UDP-glucose 4-epimerase (339 aa).

NAD(+) contacts are provided by residues 12 to 13 (FI), 32 to 37 (DNLCNS), 59 to 60 (DI), 81 to 85 (FAGLK), asparagine 100, serine 125, tyrosine 150, lysine 154, and phenylalanine 179. Serine 125 and tyrosine 150 together coordinate substrate. The active-site Proton acceptor is tyrosine 150. Residues asparagine 180, 200–201 (NL), 217–219 (AVF), arginine 232, and 293–296 (RAGD) each bind substrate.

Belongs to the NAD(P)-dependent epimerase/dehydratase family. In terms of assembly, homodimer. NAD(+) serves as cofactor.

The catalysed reaction is UDP-alpha-D-glucose = UDP-alpha-D-galactose. It functions in the pathway carbohydrate metabolism; galactose metabolism. Involved in the metabolism of galactose. Plays an essential role in the incorporation of galactose into meningococcal lipopolysaccharide surface molecules, which are important for pathogenesis. Catalyzes the conversion of UDP-galactose (UDP-Gal) to UDP-glucose (UDP-Glc) through a mechanism involving the transient reduction of NAD. This chain is UDP-glucose 4-epimerase (galE), found in Neisseria meningitidis serogroup C.